The following is a 649-amino-acid chain: Sodium/nucleoside cotransporter 1 (649 aa).

Residues 1 to 80 are Cytoplasmic-facing; sequence MENDPSRRRE…ARSFCREHMQ (80 aa). A helical membrane pass occupies residues 81 to 104; the sequence is LFRWIGTGLLCTGLSAFLLVACLL. The Extracellular portion of the chain corresponds to 105 to 109; that stretch reads DFQRA. Residues 110 to 128 form a helical membrane-spanning segment; that stretch reads LALFVLTCVVLTFLGHRLL. Residues 129–147 lie on the Cytoplasmic side of the membrane; sequence KRLLGPKLRRFLKPQGHPR. Residues 148–167 traverse the membrane as a helical segment; the sequence is LLLWFKRGLALAAFLGLVLW. Residues 168-178 are Extracellular-facing; it reads LSLDTSQRPEQ. The chain crosses the membrane as a helical span at residues 179-195; sequence LVSFAGICVFVALLFAC. Topologically, residues 196–201 are cytoplasmic; it reads SKHHCA. The chain crosses the membrane as a helical span at residues 202–222; that stretch reads VSWRAVSWGLGLQFVLGLLVI. Residues 223–261 are Extracellular-facing; sequence RTEPGFIAFEWLGEQIRIFLSYTKAGSSFVFGEALVKDV. The chain crosses the membrane as a helical span at residues 262-283; it reads FAFQVLPIIVFFSCVISVLYHV. Residues 284–294 lie on the Cytoplasmic side of the membrane; that stretch reads GLMQWVILKIA. The helical transmembrane segment at 295-318 threads the bilayer; sequence WLMQVTMGTTATETLSVAGNIFVS. At 319 to 337 the chain is on the extracellular side; sequence QTEAPLLIRPYLADMTLSE. A helical membrane pass occupies residues 338-360; it reads VHVVMTGGYATIAGSLLGAYISF. Residues 361-366 lie on the Cytoplasmic side of the membrane; sequence GIDATS. A helical transmembrane segment spans residues 367 to 386; it reads LIAASVMAAPCALALSKLVY. Over 387-423 the chain is Extracellular; the sequence is PEVEESKFRREEGVKLTYGDAQNLIEAASTGAAISVK. The chain crosses the membrane as a helical span at residues 424–446; that stretch reads VVANIAANLIAFLAVLDFINAAL. Residues 447-457 lie on the Cytoplasmic side of the membrane; sequence SWLGDMVDIQG. A helical transmembrane segment spans residues 458–479; that stretch reads LSFQLICSYILRPVAFLMGVAW. Residues 480-534 lie on the Extracellular side of the membrane; the sequence is EDCPVVAELLGIKLFLNEFVAYQDLSKYKQRRLAGAEEWVGDRKQWISVRAEVLT. The chain crosses the membrane as a helical span at residues 535–558; the sequence is TFALCGFANFSSIGIMLGGLTSMV. The Cytoplasmic segment spans residues 559 to 569; it reads PQRKSDFSQIV. Residues 570–592 traverse the membrane as a helical segment; that stretch reads LRALFTGACVSLVNACMAGILYM. The Extracellular segment spans residues 593–649; sequence PRGAEVDCMSLLNTTLSSSSFEIYQCCREAFQSVNPEFSPEALDNCCRFYNHTICAQ. N-linked (GlcNAc...) asparagine glycans are attached at residues Asn605 and Asn643.

The protein belongs to the concentrative nucleoside transporter (CNT) (TC 2.A.41) family. In terms of processing, N-glycosylated. N-glycosylation is required for localization to the plasma membrane and the transporter activity. Expressed in kidney.

The protein resides in the cell membrane. It localises to the apical cell membrane. It catalyses the reaction uridine(out) + Na(+)(out) = uridine(in) + Na(+)(in). It carries out the reaction thymidine(out) + Na(+)(out) = thymidine(in) + Na(+)(in). The enzyme catalyses cytidine(out) + Na(+)(out) = cytidine(in) + Na(+)(in). The catalysed reaction is adenosine(out) + Na(+)(out) = adenosine(in) + Na(+)(in). With respect to regulation, due to its high apparent affinity but slow transport, adenosine could act as a negative regulator of pyrimidine transport under some conditions. In terms of biological role, sodium and pyrimidine nucleoside symporter of the plasma membrane that imports uridine, thymidine and cytidine into cells by coupling their transport to the transmembrane sodium electrochemical gradient. Also transports adenosine, an atypical substrate transported with high apparent affinity, but low maximum velocity. Therefore, exhibits the transport characteristics of the nucleoside transport system cit or N2 subtype (N2/cit). Involved in renal nucleoside (re)absorption. The sequence is that of Sodium/nucleoside cotransporter 1 from Homo sapiens (Human).